The sequence spans 104 residues: Large ribosomal subunit protein uL24 (104 aa).

The protein belongs to the universal ribosomal protein uL24 family. Part of the 50S ribosomal subunit.

Its function is as follows. One of two assembly initiator proteins, it binds directly to the 5'-end of the 23S rRNA, where it nucleates assembly of the 50S subunit. Functionally, one of the proteins that surrounds the polypeptide exit tunnel on the outside of the subunit. The sequence is that of Large ribosomal subunit protein uL24 from Chromobacterium violaceum (strain ATCC 12472 / DSM 30191 / JCM 1249 / CCUG 213 / NBRC 12614 / NCIMB 9131 / NCTC 9757 / MK).